The primary structure comprises 879 residues: MKFMGANELREKYLSFFESKDHLRLQSFPLVPKNDKSLLLINAGMAPLKPYFTGLEEPPKRRITTCQKCIRTGDIENVGKTSRHGTFFEMLGNFSFGDYFKSEIIPWAWEFITETLGIPKDKLYVTIYLNDDEAYDIWTSKTDVDPSRIFRLGKDDNFWEIGVGPCGPCTEIHFDRGEGKVETVEEFLEASDADRIVEFWNLVFTQFDKDEEGNYNELAQKNIDTGMGLERIATIMQGVDNIFEIDTVKNILNKACELTNAKYGEDKDKDVSLRIITDHGKSVTFLICDGVQPSNEGRGYVLRRLLRRAARHGRLLGVKGIFLNEMVDAVVENYGEAYPELKEKADYIKKIIKLEEERFNETIDSGMDILMSYISEMEEKNEKVLSGAKAFKLYDTYGFPLELTQEILEEKGLELDIENFNKEMKEQRERARNARGESSYMGSEESPVNKVDASIVTEFDGYVNLELNSKVIVLGNNEEFKSELKEGEEGFLLTDKTPFYAEMGGQVGDRGNITSETGMAIVTDCKKNVGGKFVHYIKVIEGSLKEGQEVKLSVDASRRSNICKNHTATHMLHEALKEVLGDHVNQSGSYVDEERLRFDFTHFAALTEEELEKVELLVNEKIMTVSVVDTKEMSLDEARNSGATCLFDEKYAEKVRVVSVGDFSKELCGGTHVANSGEIGLFKIVSESGVAAGIRRIEAVTGISALKFMELKNNMLKEAASMLKCNEKDIAKRIAAQAHELKEKDKEIAELKAKLVQGAEDDILKDKVEINGVELVTAELKDVDGNSLRDLADKVRNKLNNGIVVLASDNGGKVNLVAMATKNSLANGVHCGKVIKEVAAVVGGGGGGRPDMAQAGGKNPENIAKALEKAKEVVELLVK.

4 residues coordinate Zn(2+): H566, H570, C668, and H672.

Belongs to the class-II aminoacyl-tRNA synthetase family. Zn(2+) serves as cofactor.

Its subcellular location is the cytoplasm. It catalyses the reaction tRNA(Ala) + L-alanine + ATP = L-alanyl-tRNA(Ala) + AMP + diphosphate. In terms of biological role, catalyzes the attachment of alanine to tRNA(Ala) in a two-step reaction: alanine is first activated by ATP to form Ala-AMP and then transferred to the acceptor end of tRNA(Ala). Also edits incorrectly charged Ser-tRNA(Ala) and Gly-tRNA(Ala) via its editing domain. The sequence is that of Alanine--tRNA ligase from Clostridium perfringens (strain ATCC 13124 / DSM 756 / JCM 1290 / NCIMB 6125 / NCTC 8237 / Type A).